A 418-amino-acid polypeptide reads, in one-letter code: Tyrosine--tRNA ligase (418 aa).

Tyrosine 39 is an L-tyrosine binding site. A 'HIGH' region motif is present at residues 44 to 53 (CTADSLHVGS). 2 residues coordinate L-tyrosine: tyrosine 176 and glutamine 180. The 'KMSKS' region motif lies at 236 to 240 (KMGKT). Lysine 239 lines the ATP pocket. The S4 RNA-binding domain occupies 350–416 (LPLAEMMRAT…KKRHALIRVL (67 aa)).

This sequence belongs to the class-I aminoacyl-tRNA synthetase family. TyrS type 1 subfamily. Homodimer.

Its subcellular location is the cytoplasm. The catalysed reaction is tRNA(Tyr) + L-tyrosine + ATP = L-tyrosyl-tRNA(Tyr) + AMP + diphosphate + H(+). Functionally, catalyzes the attachment of tyrosine to tRNA(Tyr) in a two-step reaction: tyrosine is first activated by ATP to form Tyr-AMP and then transferred to the acceptor end of tRNA(Tyr). The protein is Tyrosine--tRNA ligase of Rhodospirillum rubrum (strain ATCC 11170 / ATH 1.1.1 / DSM 467 / LMG 4362 / NCIMB 8255 / S1).